A 163-amino-acid chain; its full sequence is Putative protein CASTOR3P (163 aa).

The protein belongs to the GATS family.

The chain is Putative protein CASTOR3P from Homo sapiens (Human).